The primary structure comprises 1183 residues: Spermatogenesis-associated protein 31G1 (1183 aa).

Disordered regions lie at residues 109 to 153, 469 to 555, 661 to 686, 843 to 884, 973 to 1032, and 1048 to 1087; these read TPIG…FPTF, LMPA…SPWA, TVDDVPRSEATGKNTDNTKKCSSSEP, ASQG…VSEV, CLHS…TGLL, and QKRGSSRKSKAEKCGRTARLGSPTNTRENNPAQACRPAEA. A compositionally biased stretch (basic and acidic residues) spans 124 to 134; sequence CRSEGRPRATE. Residues 135–153 are compositionally biased toward polar residues; it reads TQEQVLIQSPSPSRSFPTF. Over residues 487–509 the composition is skewed to basic and acidic residues; sequence NPKERLSAPKDVRENLGYREHPH. Residues 671–685 show a composition bias toward polar residues; the sequence is TGKNTDNTKKCSSSE. Positions 847–858 are enriched in pro residues; sequence PNPPAVNPPQPT. Residues 975–984 show a composition bias toward polar residues; sequence HSSSQPQAQA. Basic residues predominate over residues 993-1002; the sequence is QKSKRLKRKA. Residues 1069 to 1079 are compositionally biased toward polar residues; that stretch reads SPTNTRENNPA.

Expressed in kidney and testis. Expressed at lower levels in stomach, intestine, epididymis and ovary. Expressed at very low levels in heart and spleen.

Functionally, dispensable for normal development and fertility. This chain is Spermatogenesis-associated protein 31G1 (Spata31g1), found in Mus musculus (Mouse).